We begin with the raw amino-acid sequence, 348 residues long: MSILLIDLSGQELRQEEIELLEHPLVAGLILFSRNFYDIEQIRHLIRSVRQKVKKPLLITVDQEGGRVQRFRQGLTQLPAMQSFACLLSDPQEQQEMAWRAGWQMAAEMTALDIDLSFAPVLDLGHQCKAIGDRSFHYEEKKLIELAEKFIQGMRQIGMSATGKHFPGHGHVLADSHLETPYDDRAKELIFAQDIRPFQSLIKQGLLDAVMPAHVIYTQCDNQPASGSSYWLKEVLRQQLGFQGAIFSDDLGMKGAGFMGDFVARCTQSLQAGCDLLLLCNEPEAVVQVLDRFKPQESQNKRIIRQTRLNKLFKKQRIDWQTLRTQRDWLENHKKLTALQQDWLAYKG.

Substrate-binding positions include Asp62, Arg70, Arg134, and 164-165 (KH). The Proton donor/acceptor role is filled by His177. Catalysis depends on Asp249, which acts as the Nucleophile.

This sequence belongs to the glycosyl hydrolase 3 family. NagZ subfamily.

Its subcellular location is the cytoplasm. It carries out the reaction Hydrolysis of terminal non-reducing N-acetyl-D-hexosamine residues in N-acetyl-beta-D-hexosaminides.. The protein operates within cell wall biogenesis; peptidoglycan recycling. Its function is as follows. Plays a role in peptidoglycan recycling by cleaving the terminal beta-1,4-linked N-acetylglucosamine (GlcNAc) from peptide-linked peptidoglycan fragments, giving rise to free GlcNAc, anhydro-N-acetylmuramic acid and anhydro-N-acetylmuramic acid-linked peptides. This Histophilus somni (strain 2336) (Haemophilus somnus) protein is Beta-hexosaminidase.